Reading from the N-terminus, the 352-residue chain is tRNA pseudouridine synthase D (352 aa).

The Nucleophile role is filled by aspartate 78. Residues glycine 153–leucine 299 form the TRUD domain.

This sequence belongs to the pseudouridine synthase TruD family.

It carries out the reaction uridine(13) in tRNA = pseudouridine(13) in tRNA. Its function is as follows. Responsible for synthesis of pseudouridine from uracil-13 in transfer RNAs. This is tRNA pseudouridine synthase D from Aeromonas hydrophila subsp. hydrophila (strain ATCC 7966 / DSM 30187 / BCRC 13018 / CCUG 14551 / JCM 1027 / KCTC 2358 / NCIMB 9240 / NCTC 8049).